The primary structure comprises 49 residues: Large ribosomal subunit protein bL33A (49 aa).

Positions 21-49 (KNKRNNPERVEMKKYCSRDNKHTLHRETK) are disordered. Basic and acidic residues predominate over residues 25-49 (NNPERVEMKKYCSRDNKHTLHRETK).

Belongs to the bacterial ribosomal protein bL33 family.

This Staphylococcus epidermidis (strain ATCC 35984 / DSM 28319 / BCRC 17069 / CCUG 31568 / BM 3577 / RP62A) protein is Large ribosomal subunit protein bL33A.